The sequence spans 312 residues: Non-structural protein 12A (312 aa).

Over residues 1-23 (MFKSGSGSLKRSGSISSVKSFSG) the composition is skewed to low complexity. 3 disordered regions span residues 1–37 (MFKS…RGSV), 62–97 (FVPE…YNQN), and 112–159 (SSKG…SHGT). Basic and acidic residues predominate over residues 63 to 73 (VPEKTKSEGNL). Polar residues predominate over residues 74–97 (KNKSSVITGNFGSSGPTNAHYNQN). Residues 122–134 (DARHTATDSRLSQ) show a composition bias toward basic and acidic residues. Residues 135 to 154 (EVKQPFSEENASGNDLNTGR) show a composition bias toward polar residues.

The protein belongs to the phytoreovirus non-structural protein Pns12A family.

Its subcellular location is the host cytoplasm. Its function is as follows. Constituent of viral factories. This chain is Non-structural protein 12A, found in Rice dwarf virus (isolate O) (RDV).